Here is a 631-residue protein sequence, read N- to C-terminus: Phosphomethylpyrimidine synthase (631 aa).

Substrate contacts are provided by residues Asn239, Met268, Tyr297, His333, 353-355 (SRG), 394-397 (DGLR), and Glu433. His437 contacts Zn(2+). Tyr460 contacts substrate. His501 contributes to the Zn(2+) binding site. [4Fe-4S] cluster is bound by residues Cys581, Cys584, and Cys589.

It belongs to the ThiC family. In terms of assembly, homodimer. Requires [4Fe-4S] cluster as cofactor.

The enzyme catalyses 5-amino-1-(5-phospho-beta-D-ribosyl)imidazole + S-adenosyl-L-methionine = 4-amino-2-methyl-5-(phosphooxymethyl)pyrimidine + CO + 5'-deoxyadenosine + formate + L-methionine + 3 H(+). Its pathway is cofactor biosynthesis; thiamine diphosphate biosynthesis. Its function is as follows. Catalyzes the synthesis of the hydroxymethylpyrimidine phosphate (HMP-P) moiety of thiamine from aminoimidazole ribotide (AIR) in a radical S-adenosyl-L-methionine (SAM)-dependent reaction. The chain is Phosphomethylpyrimidine synthase from Salmonella arizonae (strain ATCC BAA-731 / CDC346-86 / RSK2980).